The following is a 720-amino-acid chain: Polyribonucleotide nucleotidyltransferase (720 aa).

The Mg(2+) site is built by Asp486 and Asp492. The 60-residue stretch at 553 to 612 folds into the KH domain; sequence PRITVINVPKEKIREVIGTGGKVIREIVEFSGAKIDIEDDGTIKIASTSEESTQKAIDRI. The 69-residue stretch at 622 to 690 folds into the S1 motif domain; sequence GKIYNGKVVK…DRGKVKLSMR (69 aa). The disordered stretch occupies residues 698–720; sequence EDISDKVGPKGGRGGRGEGDLAE.

The protein belongs to the polyribonucleotide nucleotidyltransferase family. It depends on Mg(2+) as a cofactor.

The protein localises to the cytoplasm. The catalysed reaction is RNA(n+1) + phosphate = RNA(n) + a ribonucleoside 5'-diphosphate. Functionally, involved in mRNA degradation. Catalyzes the phosphorolysis of single-stranded polyribonucleotides processively in the 3'- to 5'-direction. The chain is Polyribonucleotide nucleotidyltransferase from Granulibacter bethesdensis (strain ATCC BAA-1260 / CGDNIH1).